The chain runs to 289 residues: Four and a half LIM domains protein 3 (289 aa).

Serine 2 carries the N-acetylserine modification. A C4-type zinc finger spans residues 7–31 (CAKCNESLYGRKYIQTDSGPYCVPC). LIM zinc-binding domains follow at residues 40–92 (CAEC…CNEC) and 101–153 (CSAC…CVPC). Lysine 157 is subject to N6-acetyllysine. LIM zinc-binding domains follow at residues 162–212 (CARC…CVAC) and 221–275 (CSSC…FVPD). An N6-acetyllysine modification is found at lysine 244.

Interacts with SOX15; the interaction recruits FHL3 to FOXK1 promoters where it acts as a transcriptional coactivator of FOXK1. In terms of tissue distribution, expressed in myogenic progenitor cells (at protein level). Expressed in skeletal striated muscle and the heart. Expressed to a lesser extent, in lung, and kidney. Expressed in skin and skeletal muscles such as the masseter, tongue, tibialis anterior and plantar muscles.

It localises to the nucleus. It is found in the cytoplasm. Recruited by SOX15 to FOXK1 promoters where it acts as a transcriptional coactivator of FOXK1. The chain is Four and a half LIM domains protein 3 (Fhl3) from Mus musculus (Mouse).